The primary structure comprises 420 residues: ATP phosphoribosyltransferase regulatory subunit (420 aa).

It belongs to the class-II aminoacyl-tRNA synthetase family. HisZ subfamily. As to quaternary structure, heteromultimer composed of HisG and HisZ subunits.

It localises to the cytoplasm. Its pathway is amino-acid biosynthesis; L-histidine biosynthesis; L-histidine from 5-phospho-alpha-D-ribose 1-diphosphate: step 1/9. Its function is as follows. Required for the first step of histidine biosynthesis. May allow the feedback regulation of ATP phosphoribosyltransferase activity by histidine. The polypeptide is ATP phosphoribosyltransferase regulatory subunit (Bacillus cereus (strain ZK / E33L)).